Reading from the N-terminus, the 211-residue chain is Glycerol-3-phosphate acyltransferase (211 aa).

The next 6 membrane-spanning stretches (helical) occupy residues 10-30 (FYTW…FGLL), 63-83 (TLTL…IKFL), 90-110 (SIII…PIWL), 126-146 (LGYY…FFIL), 152-172 (LSAL…YPHL), and 174-194 (AHCI…ANIA).

The protein belongs to the PlsY family. As to quaternary structure, probably interacts with PlsX.

The protein resides in the cell inner membrane. It carries out the reaction an acyl phosphate + sn-glycerol 3-phosphate = a 1-acyl-sn-glycero-3-phosphate + phosphate. It participates in lipid metabolism; phospholipid metabolism. Functionally, catalyzes the transfer of an acyl group from acyl-phosphate (acyl-PO(4)) to glycerol-3-phosphate (G3P) to form lysophosphatidic acid (LPA). This enzyme utilizes acyl-phosphate as fatty acyl donor, but not acyl-CoA or acyl-ACP. This chain is Glycerol-3-phosphate acyltransferase, found in Bartonella quintana (strain Toulouse) (Rochalimaea quintana).